The sequence spans 307 residues: Ribosomal RNA small subunit methyltransferase H (307 aa).

Residues 32 to 34 (AGH), Asp-51, Ile-82, Asp-99, and Gln-106 each bind S-adenosyl-L-methionine.

Belongs to the methyltransferase superfamily. RsmH family.

The protein resides in the cytoplasm. The catalysed reaction is cytidine(1402) in 16S rRNA + S-adenosyl-L-methionine = N(4)-methylcytidine(1402) in 16S rRNA + S-adenosyl-L-homocysteine + H(+). Functionally, specifically methylates the N4 position of cytidine in position 1402 (C1402) of 16S rRNA. The chain is Ribosomal RNA small subunit methyltransferase H from Campylobacter concisus (strain 13826).